The chain runs to 146 residues: D-aminoacyl-tRNA deacylase (146 aa).

Residues 137 to 138 (GP) carry the Gly-cisPro motif, important for rejection of L-amino acids motif.

It belongs to the DTD family. In terms of assembly, homodimer.

It localises to the cytoplasm. It carries out the reaction glycyl-tRNA(Ala) + H2O = tRNA(Ala) + glycine + H(+). The enzyme catalyses a D-aminoacyl-tRNA + H2O = a tRNA + a D-alpha-amino acid + H(+). In terms of biological role, an aminoacyl-tRNA editing enzyme that deacylates mischarged D-aminoacyl-tRNAs. Also deacylates mischarged glycyl-tRNA(Ala), protecting cells against glycine mischarging by AlaRS. Acts via tRNA-based rather than protein-based catalysis; rejects L-amino acids rather than detecting D-amino acids in the active site. By recycling D-aminoacyl-tRNA to D-amino acids and free tRNA molecules, this enzyme counteracts the toxicity associated with the formation of D-aminoacyl-tRNA entities in vivo and helps enforce protein L-homochirality. This is D-aminoacyl-tRNA deacylase from Thermodesulfovibrio yellowstonii (strain ATCC 51303 / DSM 11347 / YP87).